The primary structure comprises 456 residues: Bifunctional protein GlmU (456 aa).

A pyrophosphorylase region spans residues 1–229; that stretch reads MLNSAMSVVI…ISETDGVNNR (229 aa). UDP-N-acetyl-alpha-D-glucosamine-binding positions include 11-14, Lys-25, Gln-76, 81-82, 103-105, Gly-140, Glu-154, Asn-169, and Asn-227; these read LAAG, GT, and YGD. Residue Asp-105 participates in Mg(2+) binding. Residue Asn-227 participates in Mg(2+) binding. The interval 230–250 is linker; the sequence is LQLSRLERIYQAEQAEKLLLS. The segment at 251–456 is N-acetyltransferase; that stretch reads GVMLRDPARF…QGWQRPVKKK (206 aa). Residues Arg-333 and Lys-351 each contribute to the UDP-N-acetyl-alpha-D-glucosamine site. Residue His-363 is the Proton acceptor of the active site. 2 residues coordinate UDP-N-acetyl-alpha-D-glucosamine: Tyr-366 and Asn-377. Residues Ala-380, 386 to 387, Ser-405, Ala-423, and Arg-440 contribute to the acetyl-CoA site; that span reads NY.

It in the N-terminal section; belongs to the N-acetylglucosamine-1-phosphate uridyltransferase family. In the C-terminal section; belongs to the transferase hexapeptide repeat family. In terms of assembly, homotrimer. It depends on Mg(2+) as a cofactor.

It localises to the cytoplasm. The catalysed reaction is alpha-D-glucosamine 1-phosphate + acetyl-CoA = N-acetyl-alpha-D-glucosamine 1-phosphate + CoA + H(+). The enzyme catalyses N-acetyl-alpha-D-glucosamine 1-phosphate + UTP + H(+) = UDP-N-acetyl-alpha-D-glucosamine + diphosphate. Its pathway is nucleotide-sugar biosynthesis; UDP-N-acetyl-alpha-D-glucosamine biosynthesis; N-acetyl-alpha-D-glucosamine 1-phosphate from alpha-D-glucosamine 6-phosphate (route II): step 2/2. The protein operates within nucleotide-sugar biosynthesis; UDP-N-acetyl-alpha-D-glucosamine biosynthesis; UDP-N-acetyl-alpha-D-glucosamine from N-acetyl-alpha-D-glucosamine 1-phosphate: step 1/1. It participates in bacterial outer membrane biogenesis; LPS lipid A biosynthesis. Catalyzes the last two sequential reactions in the de novo biosynthetic pathway for UDP-N-acetylglucosamine (UDP-GlcNAc). The C-terminal domain catalyzes the transfer of acetyl group from acetyl coenzyme A to glucosamine-1-phosphate (GlcN-1-P) to produce N-acetylglucosamine-1-phosphate (GlcNAc-1-P), which is converted into UDP-GlcNAc by the transfer of uridine 5-monophosphate (from uridine 5-triphosphate), a reaction catalyzed by the N-terminal domain. The sequence is that of Bifunctional protein GlmU from Salmonella agona (strain SL483).